Reading from the N-terminus, the 485-residue chain is Catalase isozyme 1 (485 aa).

Catalysis depends on residues His58 and Asn131. Tyr341 provides a ligand contact to heme.

The protein belongs to the catalase family. In terms of assembly, homotetramer. Requires heme as cofactor.

Its subcellular location is the peroxisome. The catalysed reaction is 2 H2O2 = O2 + 2 H2O. In terms of biological role, occurs in almost all aerobically respiring organisms and serves to protect cells from the toxic effects of hydrogen peroxide. The polypeptide is Catalase isozyme 1 (CAT1) (Nicotiana plumbaginifolia (Leadwort-leaved tobacco)).